The chain runs to 400 residues: Golgin-45 (400 aa).

The span at 1–16 shows a compositional bias: polar residues; the sequence is MTTKNLETKVTVTSSP. The tract at residues 1 to 58 is disordered; the sequence is MTTKNLETKVTVTSSPIRGAGDGMETEEPPKSVEVTSGVQSRKHHSLQSPWKKAVPSE. Serine 15 is subject to Phosphoserine. Residues 18–22 carry the Tankyrase-binding motif motif; that stretch reads RGAGD. Phosphoserine is present on serine 49. The stretch at 120–213 forms a coiled coil; it reads NKELSEVKNV…QLERMSIQCD (94 aa). Position 348 is a phosphothreonine (threonine 348). Phosphoserine is present on serine 353. The essential for interaction with GORASP2 stretch occupies residues 394–400; the sequence is RGELIAL.

Interacts with GORASP2. Interacts with the GTP-bound form of RAB2, but not with other Golgi Rab proteins. Identified in a complex with RAB2 and GORASP2. Post-translationally, ADP-ribosylated by tankyrase TNKS and TNKS2. Poly-ADP-ribosylated protein is recognized by RNF146, followed by ubiquitination. In terms of processing, ubiquitinated by RNF146 when poly-ADP-ribosylated, leading to its degradation. Detected in adrenal gland.

It is found in the golgi apparatus membrane. The protein resides in the nucleus. The protein localises to the cytoplasm. In terms of biological role, required for normal Golgi structure and for protein transport from the endoplasmic reticulum (ER) through the Golgi apparatus to the cell surface. The protein is Golgin-45 (BLZF1) of Homo sapiens (Human).